Reading from the N-terminus, the 197-residue chain is RILP-like protein 2 (197 aa).

Positions 14–96 constitute an RH1 domain; that stretch reads EDEGALAKSP…KQEVEGLRRA (83 aa). The stretch at 65-153 forms a coiled coil; the sequence is LEALVNEGSL…VQEELQCYRS (89 aa). In terms of domain architecture, RH2 spans 119–184; it reads RPRFTLQELR…GNGEKEERTI (66 aa).

Homodimer. Interacts (via N-terminus) with MYO5A, the interaction is required for its role in dendrite formation. Interacts with RAC1. Interacts with RAB8A; interaction is dependent on the phosphorylation of RAB8A on 'Thr-72'. Interacts with RAB10 and RAB12; interaction is dependent on the phosphorylation of 'Thr-73' on RAB10 and 'Ser-105' on RAB12.

The protein localises to the cytoplasm. It localises to the cytosol. It is found in the cytoskeleton. Its subcellular location is the microtubule organizing center. The protein resides in the centrosome. The protein localises to the cell projection. It localises to the cilium. Functionally, involved in cell shape and neuronal morphogenesis, positively regulating the establishment and maintenance of dendritic spines. Plays a role in cellular protein transport, including protein transport away from primary cilia. May function via activation of RAC1 and PAK1. This is RILP-like protein 2 (Rilpl2) from Rattus norvegicus (Rat).